A 323-amino-acid chain; its full sequence is Cell division protein ZipA (323 aa).

The Periplasmic segment spans residues 1 to 5 (MQELR). Residues 6-26 (FVLIVVGALAIAALLFHGLWT) traverse the membrane as a helical segment. The Cytoplasmic segment spans residues 27–323 (SKKEGKAKFG…QIVEFNAANA (297 aa)). The tract at residues 35-92 (FGNKPLGKLDVDQEDKDTPGQERDFAPDPEDDFEIIRKDRKEPDFGMENSFDNKFSSD) is disordered. 2 stretches are compositionally biased toward basic and acidic residues: residues 41–60 (GKLD…RDFA) and 68–78 (EIIRKDRKEPD).

The protein belongs to the ZipA family. As to quaternary structure, interacts with FtsZ via their C-terminal domains.

It localises to the cell inner membrane. Essential cell division protein that stabilizes the FtsZ protofilaments by cross-linking them and that serves as a cytoplasmic membrane anchor for the Z ring. Also required for the recruitment to the septal ring of downstream cell division proteins. This chain is Cell division protein ZipA, found in Vibrio campbellii (strain ATCC BAA-1116).